Consider the following 498-residue polypeptide: L-proline--[L-prolyl-carrier protein] ligase (498 aa).

The protein belongs to the ATP-dependent AMP-binding enzyme family.

The catalysed reaction is holo-[peptidyl-carrier protein] + L-proline + ATP = L-prolyl-[peptidyl-carrier protein] + AMP + diphosphate. Its function is as follows. Involved in the biosynthesis of pyoluteorin. Catalyzes the conversion of L-proline to L-prolyl-AMP and the transfer of the L-prolyl group to acyl carrier protein PltL. The protein is L-proline--[L-prolyl-carrier protein] ligase of Pseudomonas fluorescens (strain ATCC BAA-477 / NRRL B-23932 / Pf-5).